Here is a 351-residue protein sequence, read N- to C-terminus: Photosystem II D2 protein (351 aa).

The chain crosses the membrane as a helical span at residues 39–59 (CAYLALGGWLTGTTFVTSWYT). His116 contacts chlorophyll a. The chain crosses the membrane as a helical span at residues 123–139 (GFMLRQFEIARLVGIRP). Pheophytin a contacts are provided by Gln128 and Asn141. Residues 151 to 164 (VFVSVFLMYPLGQS) form a helical membrane-spanning segment. His196 is a chlorophyll a binding site. Residues 206–226 (GALLCAIHGATVENTLFEDGE) traverse the membrane as a helical segment. Residues His213 and Phe260 each coordinate a plastoquinone. His213 is a binding site for Fe cation. His267 provides a ligand contact to Fe cation. A helical membrane pass occupies residues 277 to 293 (GLWMSAIGIVGLALNLR).

It belongs to the reaction center PufL/M/PsbA/D family. As to quaternary structure, PSII is composed of 1 copy each of membrane proteins PsbA, PsbB, PsbC, PsbD, PsbE, PsbF, PsbH, PsbI, PsbJ, PsbK, PsbL, PsbM, PsbT, PsbX, PsbY, PsbZ, Psb30/Ycf12, peripheral proteins PsbO, CyanoQ (PsbQ), PsbU, PsbV and a large number of cofactors. It forms dimeric complexes. The cofactor is The D1/D2 heterodimer binds P680, chlorophylls that are the primary electron donor of PSII, and subsequent electron acceptors. It shares a non-heme iron and each subunit binds pheophytin, quinone, additional chlorophylls, carotenoids and lipids. There is also a Cl(-1) ion associated with D1 and D2, which is required for oxygen evolution. The PSII complex binds additional chlorophylls, carotenoids and specific lipids..

Its subcellular location is the cellular thylakoid membrane. It carries out the reaction 2 a plastoquinone + 4 hnu + 2 H2O = 2 a plastoquinol + O2. Functionally, photosystem II (PSII) is a light-driven water:plastoquinone oxidoreductase that uses light energy to abstract electrons from H(2)O, generating O(2) and a proton gradient subsequently used for ATP formation. It consists of a core antenna complex that captures photons, and an electron transfer chain that converts photonic excitation into a charge separation. The D1/D2 (PsbA/PsbD) reaction center heterodimer binds P680, the primary electron donor of PSII as well as several subsequent electron acceptors. D2 is needed for assembly of a stable PSII complex. This chain is Photosystem II D2 protein, found in Crocosphaera subtropica (strain ATCC 51142 / BH68) (Cyanothece sp. (strain ATCC 51142)).